The sequence spans 66 residues: Large ribosomal subunit protein bL32 (66 aa).

The protein belongs to the bacterial ribosomal protein bL32 family.

The polypeptide is Large ribosomal subunit protein bL32 (Rickettsia akari (strain Hartford)).